Here is a 325-residue protein sequence, read N- to C-terminus: Leucine-rich repeat protein FLOR 1 (325 aa).

10 LRR repeats span residues Asn65 to Asp88, Leu89 to Leu114, Lys115 to Ser140, Thr142 to Met162, Pro163 to Ser185, Val187 to Tyr211, Phe213 to Arg233, Asn234 to Phe256, Ala257 to Lys280, and Leu281 to Thr305.

It belongs to the polygalacturonase-inhibiting protein family. In terms of assembly, interacts with MADS domain transcription factors during flower development. Component of a complex made of FLOR1, VSP1 and AGAMOUS (AG). Binds directly with AG. As to expression, confined to flowers and inflorescences (e.g. inflorescence meristems, floral meristems, stamens and carpels).

The protein localises to the cytoplasm. The protein resides in the nucleus. Its subcellular location is the perinuclear region. It is found in the cell membrane. Promotes flowering transition in long days (LD). This is Leucine-rich repeat protein FLOR 1 from Arabidopsis thaliana (Mouse-ear cress).